The sequence spans 580 residues: Double-stranded RNA-binding protein Staufen homolog 1 (580 aa).

Residue Ser2 is modified to N-acetylserine. Over residues 34 to 44 (SIPSTTSSLPS) the composition is skewed to polar residues. Residues 34-59 (SIPSTTSSLPSENAGRPIQNSALPSA) form a disordered region. Residues 72–162 (TPTVELNALC…AAKALRTLQS (91 aa)) form the DRBM 1 domain. Arg108 carries the post-translational modification Asymmetric dimethylarginine. The residue at position 115 (Arg115) is an Asymmetric dimethylarginine; alternate. Position 115 is an omega-N-methylarginine; alternate (Arg115). Residues 158–189 (RTLQSEPLPERPEGRRPGEQVNGRESEEENLN) form a disordered region. Basic and acidic residues predominate over residues 165–182 (LPERPEGRRPGEQVNGRE). Ser183 carries the post-translational modification Phosphoserine. Positions 191–258 (SEISQVFEIA…AIAVLEELKK (68 aa)) constitute a DRBM 2 domain. A Phosphoserine modification is found at Ser285. Residues 293–361 (NPISRLAQIQ…AENMLEILGF (69 aa)) form the DRBM 3 domain. The tract at residues 367–404 (QPTKPALKSEEKTPIKKPGDGRKVTFFEPGSGDENGTS) is disordered. Positions 373 to 391 (LKSEEKTPIKKPGDGRKVT) are enriched in basic and acidic residues. Ser397 carries the post-translational modification Phosphoserine.

As to quaternary structure, binds tubulin. Binds with low affinity single-stranded RNA or DNA homopolymers. Interacts with CASC3 in an RNA-dependent manner. Identified in a mRNP complex, at least composed of DHX9, DDX3X, ELAVL1, HNRNPU, IGF2BP1, ILF3, PABPC1, PCBP2, PTBP2, STAU1, STAU2, SYNCRIP and YBX1. Interacts with the influenza virus nonstructural protein NS1.

Its subcellular location is the cytoplasm. The protein resides in the rough endoplasmic reticulum. In terms of biological role, binds double-stranded RNA (regardless of the sequence) and tubulin. May play a role in specific positioning of mRNAs at given sites in the cell by cross-linking cytoskeletal and RNA components, and in stimulating their translation at the site. This chain is Double-stranded RNA-binding protein Staufen homolog 1 (STAU1), found in Ailuropoda melanoleuca (Giant panda).